We begin with the raw amino-acid sequence, 234 residues long: Structural PPIase-like protein L605 (234 aa).

The region spanning 18–205 is the PPIase cyclophilin-type domain; that stretch reads YMDIVLNNEI…PTFSIGKCGA (188 aa).

Belongs to the cyclophilin-type PPIase family. Homotrimer.

It localises to the virion. It is found in the host cytoplasm. The polypeptide is Structural PPIase-like protein L605 (Acanthamoeba polyphaga mimivirus (APMV)).